A 161-amino-acid chain; its full sequence is N5-carboxyaminoimidazole ribonucleotide mutase (161 aa).

Substrate is bound by residues S9, D12, and R39.

This sequence belongs to the AIR carboxylase family. Class I subfamily.

The enzyme catalyses 5-carboxyamino-1-(5-phospho-D-ribosyl)imidazole + H(+) = 5-amino-1-(5-phospho-D-ribosyl)imidazole-4-carboxylate. The protein operates within purine metabolism; IMP biosynthesis via de novo pathway; 5-amino-1-(5-phospho-D-ribosyl)imidazole-4-carboxylate from 5-amino-1-(5-phospho-D-ribosyl)imidazole (N5-CAIR route): step 2/2. Functionally, catalyzes the conversion of N5-carboxyaminoimidazole ribonucleotide (N5-CAIR) to 4-carboxy-5-aminoimidazole ribonucleotide (CAIR). The polypeptide is N5-carboxyaminoimidazole ribonucleotide mutase (Vibrio cholerae serotype O1 (strain ATCC 39315 / El Tor Inaba N16961)).